The following is a 79-amino-acid chain: Translational regulator CsrA (79 aa).

This sequence belongs to the CsrA/RsmA family. As to quaternary structure, homodimer; the beta-strands of each monomer intercalate to form a hydrophobic core, while the alpha-helices form wings that extend away from the core.

The protein resides in the cytoplasm. Its function is as follows. A translational regulator that binds mRNA to regulate translation initiation and/or mRNA stability. Usually binds in the 5'-UTR at or near the Shine-Dalgarno sequence preventing ribosome-binding, thus repressing translation. Its main target seems to be the major flagellin gene, while its function is anatagonized by FliW. In Syntrophus aciditrophicus (strain SB), this protein is Translational regulator CsrA.